Consider the following 318-residue polypeptide: MMVDPNGNESSATYFILIGLPGLEEAQFWLAFPLCSLYLIAVLGNLTIIYIVRTEHSLHEPMYIFLCMLSGIDILISTSSMPKMLAIFWFNSTTIQFDACLLQMFAIHSLSGMESTVLLAMAFDRYVAICHPLRHATVLTLPRVTKIGVAAVVRGAALMAPLPVFIKQLPFCRSNILSHSYCLHQDVMKLACDDIRVNVVYGLIVIISAIGLDSLLISFSYLLILKTVLGLTREAQAKAFGTCVSHVCAVFIFYVPFIGLSMVHRFSKRRDSPLPVILANIYLLVPPVLNPIVYGVKTKEIRQRILRLFHVATHASEP.

The Extracellular segment spans residues 1–31 (MMVDPNGNESSATYFILIGLPGLEEAQFWLA). N-linked (GlcNAc...) asparagine glycosylation is present at N8. Residues 32 to 52 (FPLCSLYLIAVLGNLTIIYIV) traverse the membrane as a helical segment. At 53-60 (RTEHSLHE) the chain is on the cytoplasmic side. A helical transmembrane segment spans residues 61–81 (PMYIFLCMLSGIDILISTSSM). Residues 82 to 100 (PKMLAIFWFNSTTIQFDAC) are Extracellular-facing. N91 carries N-linked (GlcNAc...) asparagine glycosylation. C100 and C182 are joined by a disulfide. Residues 101 to 123 (LLQMFAIHSLSGMESTVLLAMAF) form a helical membrane-spanning segment. Over 124–145 (DRYVAICHPLRHATVLTLPRVT) the chain is Cytoplasmic. A helical membrane pass occupies residues 146 to 166 (KIGVAAVVRGAALMAPLPVFI). The Extracellular segment spans residues 167 to 198 (KQLPFCRSNILSHSYCLHQDVMKLACDDIRVN). Residues 199–219 (VVYGLIVIISAIGLDSLLISF) traverse the membrane as a helical segment. The Cytoplasmic segment spans residues 220-239 (SYLLILKTVLGLTREAQAKA). A helical membrane pass occupies residues 240 to 260 (FGTCVSHVCAVFIFYVPFIGL). The Extracellular portion of the chain corresponds to 261 to 275 (SMVHRFSKRRDSPLP). The chain crosses the membrane as a helical span at residues 276–296 (VILANIYLLVPPVLNPIVYGV). Topologically, residues 297 to 318 (KTKEIRQRILRLFHVATHASEP) are cytoplasmic.

Belongs to the G-protein coupled receptor 1 family. As to expression, highly expressed in prostate. Very low levels may be detected in some other tissues, such as placenta, skeletal muscle, heart, ovary and testis. Up-regulated in prostate cancers.

It is found in the cell membrane. Functionally, odorant receptor. This is Olfactory receptor 51E1 (OR51E1) from Homo sapiens (Human).